A 514-amino-acid chain; its full sequence is 2-isopropylmalate synthase (514 aa).

The Pyruvate carboxyltransferase domain maps to 5–267; that stretch reads IYIFDTTLRD…HTDIVTEEIT (263 aa). Mn(2+) contacts are provided by D14, H202, H204, and N238. The segment at 392–514 is regulatory domain; that stretch reads KLKYYQVFTG…SKDLQKISAN (123 aa).

Belongs to the alpha-IPM synthase/homocitrate synthase family. LeuA type 1 subfamily. In terms of assembly, homodimer. Mn(2+) serves as cofactor.

It localises to the cytoplasm. It carries out the reaction 3-methyl-2-oxobutanoate + acetyl-CoA + H2O = (2S)-2-isopropylmalate + CoA + H(+). Its pathway is amino-acid biosynthesis; L-leucine biosynthesis; L-leucine from 3-methyl-2-oxobutanoate: step 1/4. In terms of biological role, catalyzes the condensation of the acetyl group of acetyl-CoA with 3-methyl-2-oxobutanoate (2-ketoisovalerate) to form 3-carboxy-3-hydroxy-4-methylpentanoate (2-isopropylmalate). The protein is 2-isopropylmalate synthase of Clostridium kluyveri (strain NBRC 12016).